A 153-amino-acid polypeptide reads, in one-letter code: NAD(P)H-quinone oxidoreductase subunit N (153 aa).

This sequence belongs to the complex I NdhN subunit family. NDH-1 can be composed of about 15 different subunits; different subcomplexes with different compositions have been identified which probably have different functions.

It localises to the cellular thylakoid membrane. It carries out the reaction a plastoquinone + NADH + (n+1) H(+)(in) = a plastoquinol + NAD(+) + n H(+)(out). The enzyme catalyses a plastoquinone + NADPH + (n+1) H(+)(in) = a plastoquinol + NADP(+) + n H(+)(out). Its function is as follows. NDH-1 shuttles electrons from an unknown electron donor, via FMN and iron-sulfur (Fe-S) centers, to quinones in the respiratory and/or the photosynthetic chain. The immediate electron acceptor for the enzyme in this species is believed to be plastoquinone. Couples the redox reaction to proton translocation, and thus conserves the redox energy in a proton gradient. Cyanobacterial NDH-1 also plays a role in inorganic carbon-concentration. The chain is NAD(P)H-quinone oxidoreductase subunit N from Synechococcus sp. (strain CC9311).